A 484-amino-acid chain; its full sequence is T-complex protein 1 subunit delta (484 aa).

The protein belongs to the TCP-1 chaperonin family. Component of the T-complex protein 1 (TCP1) complex.

Its subcellular location is the cytoplasm. Its function is as follows. Molecular chaperone; assists the folding of proteins upon ATP hydrolysis. This is T-complex protein 1 subunit delta (CCT4) from Encephalitozoon cuniculi (strain GB-M1) (Microsporidian parasite).